Here is a 301-residue protein sequence, read N- to C-terminus: 2-methoxy-6-polyprenyl-1,4-benzoquinol methylase, mitochondrial (301 aa).

The N-terminal 16 residues, 1–16 (MQTTRSTRLLSLARRF), are a transit peptide targeting the mitochondrion. A compositionally biased stretch (polar residues) spans 20-31 (RTASQSAQNSKG). Residues 20–44 (RTASQSAQNSKGMASGAESISGKEK) are disordered. Residues threonine 111, aspartate 139, and 173 to 174 (DA) each bind S-adenosyl-L-methionine.

The protein belongs to the class I-like SAM-binding methyltransferase superfamily. MenG/UbiE family. As to quaternary structure, component of a multi-subunit COQ enzyme complex.

It is found in the mitochondrion inner membrane. The enzyme catalyses a 2-methoxy-6-(all-trans-polyprenyl)benzene-1,4-diol + S-adenosyl-L-methionine = a 5-methoxy-2-methyl-3-(all-trans-polyprenyl)benzene-1,4-diol + S-adenosyl-L-homocysteine + H(+). It participates in cofactor biosynthesis; ubiquinone biosynthesis. In terms of biological role, methyltransferase required for the conversion of 2-polyprenyl-6-methoxy-1,4-benzoquinol (DDMQH2) to 2-polyprenyl-3-methyl-6-methoxy-1,4-benzoquinol (DMQH2). This chain is 2-methoxy-6-polyprenyl-1,4-benzoquinol methylase, mitochondrial, found in Drosophila melanogaster (Fruit fly).